The chain runs to 175 residues: MQTIILGGGCFWCTESVFQSVKGVQKVTSGYMGGEDANLANYKDVCSGTTGHIEVVRVDFDDTIVPLEVVLDIFFATHDPTTRDRQGNDIGSQYRSVVFYTDEETQKPTIDRTINKLRDMGLDIVTEVHPVHEFHVAEDYHQDYFNKNPTQGYCQAVIPPKLGKLRKEFKQYMAK.

Residue C10 is part of the active site.

This sequence belongs to the MsrA Met sulfoxide reductase family.

The enzyme catalyses L-methionyl-[protein] + [thioredoxin]-disulfide + H2O = L-methionyl-(S)-S-oxide-[protein] + [thioredoxin]-dithiol. It carries out the reaction [thioredoxin]-disulfide + L-methionine + H2O = L-methionine (S)-S-oxide + [thioredoxin]-dithiol. Functionally, has an important function as a repair enzyme for proteins that have been inactivated by oxidation. Catalyzes the reversible oxidation-reduction of methionine sulfoxide in proteins to methionine. This Psychrobacter sp. (strain PRwf-1) protein is Peptide methionine sulfoxide reductase MsrA.